The following is an 892-amino-acid chain: Zinc finger protein 512B (892 aa).

The tract at residues 1–82 (MTDPFCVGGR…KKGRPKAENQ (82 aa)) is disordered. The segment covering 8–19 (GGRRLPGSSKSG) has biased composition (low complexity). A C2H2-type 1; atypical zinc finger spans residues 105-129 (VKCPNSGCWLEFPSIYGLKYHYQRC). Residues 140-163 (FPCPFCEAAFTSKTQLEKHRIWNH) form a C2H2-type 2 zinc finger. Disordered stretches follow at residues 323–473 (MVLL…RKKV) and 562–582 (EHSAKPSDAEASEGGEQEERE). Residues 371–384 (SMGQSSAFQLSADT) show a composition bias toward polar residues. Residues 385–398 (SSGSLSPGSRPSGG) show a composition bias toward low complexity. The residue at position 409 (serine 409) is a Phosphoserine. Over residues 418-428 (TKHRRKQKTPK) the composition is skewed to basic residues. The NuRD interaction motif motif lies at 421–427 (RRKQKTP). The C2H2-type 3 zinc-finger motif lies at 540-563 (LKCQHCRKQFKSKAGLNYHTMAEH). The C2H2-type 4; atypical zinc finger occupies 594–618 (LRCPQEGCGAAFSSLMGYQYHQRRC). The C2H2-type 5 zinc finger occupies 630-653 (FPCTHCGKTYRSKAGHDYHVRSEH). Residues 649 to 682 (VRSEHTAPPPEEPTDKSPEAEDPLGVERTPSGRV) are disordered. Residue serine 686 is modified to Phosphoserine. The C2H2-type 6; atypical zinc-finger motif lies at 750 to 774 (VNCPNDCCEAIYSSVSGLKAHLASC). Residues 784-807 (YRCLLCPKEFSSESGVKYHILKTH) form a C2H2-type 7 zinc finger. The disordered stretch occupies residues 812-892 (FRTSADPPPK…KVGVSKAPEK (81 aa)). A compositionally biased stretch (basic and acidic residues) spans 819-831 (PPKHRSQDSLVPK). Residues 832–849 (KEKKKNLAGGKKRGRKPK) are compositionally biased toward basic residues. Residues 850–876 (ERTPEEPVAKLPPRRDDWPPGCRDKGA) are compositionally biased toward basic and acidic residues.

This sequence belongs to the krueppel C2H2-type zinc-finger protein family. As to quaternary structure, interacts (via its NuRD interaction motif) with RBBP4 of the nucleosome remodeling and deacetylase (NuRD) complex; the interaction is direct and may play a role in repressing gene expression.

The protein resides in the nucleus. In terms of biological role, involved in transcriptional regulation by repressing gene expression. Associates with the nucleosome remodeling and histone deacetylase (NuRD) complex, which promotes transcriptional repression by histone deacetylation and nucleosome remodeling. The sequence is that of Zinc finger protein 512B (ZNF512B) from Homo sapiens (Human).